Here is a 1136-residue protein sequence, read N- to C-terminus: Protein stu-1 (1136 aa).

2 HEAT repeats span residues 95-133 (TLPV…ERSV) and 167-205 (YVPT…KSDL). 3 disordered regions span residues 524–554 (KDPH…MGAP), 567–794 (RAMA…QPQI), and 821–884 (TAGQ…LLDS). Residues 595 to 622 (VSSTSQASVASASTASAVPAPTKSAFGA) are compositionally biased toward low complexity. Positions 659–668 (PAEPASPPSK) are enriched in pro residues. The span at 673–683 (TVTSPKTQTLV) shows a compositional bias: polar residues. Residues 701–716 (SSESGIPIPVSGISSP) are compositionally biased toward low complexity. Polar residues-rich tracts occupy residues 777-793 (LPTQ…QQPQ) and 822-833 (AGQTQPQSTYTS).

This sequence belongs to the CLASP family. In terms of assembly, interacts with microtubules.

It is found in the nucleus. The protein resides in the cytoplasm. It localises to the cytoskeleton. Its subcellular location is the spindle. Microtubule binding protein that promotes the stabilization of dynamic microtubules. Required for mitotic spindle formation. In Neurospora crassa (strain ATCC 24698 / 74-OR23-1A / CBS 708.71 / DSM 1257 / FGSC 987), this protein is Protein stu-1 (stu-1).